Reading from the N-terminus, the 570-residue chain is Pyruvate decarboxylase (570 aa).

A propeptide spans 1-2 (MV) (removed in mature form). Positions 33 and 120 each coordinate substrate. The segment at 394 to 476 (DSWFNGIQLK…MLINNRGYTI (83 aa)) is thiamine pyrophosphate binding. The Mg(2+) site is built by Asp-444, Asn-471, and Gly-473. Glu-477 lines the substrate pocket.

It belongs to the TPP enzyme family. In terms of assembly, homomer. Requires a metal cation as cofactor. Thiamine diphosphate serves as cofactor.

It is found in the cytoplasm. It carries out the reaction a 2-oxocarboxylate + H(+) = an aldehyde + CO2. Its pathway is carbohydrate metabolism; pyruvate metabolism. The polypeptide is Pyruvate decarboxylase (cfp) (Neurospora crassa (strain ATCC 24698 / 74-OR23-1A / CBS 708.71 / DSM 1257 / FGSC 987)).